A 77-amino-acid polypeptide reads, in one-letter code: Large ribosomal subunit protein uL24c (77 aa).

Belongs to the universal ribosomal protein uL24 family. Part of the 50S ribosomal subunit.

The protein localises to the plastid. It localises to the chloroplast. One of two assembly initiator proteins, it binds directly to the 5'-end of the 23S rRNA, where it nucleates assembly of the 50S subunit. The sequence is that of Large ribosomal subunit protein uL24c (rpl24) from Trieres chinensis (Marine centric diatom).